Consider the following 90-residue polypeptide: Protein S100-A6 (90 aa).

2 EF-hand domains span residues 12–47 and 48–83; these read LIGIFHKYSGKEGDKHTLSKKELKELIQKELTIGSK and LQDAEIVKLMDDLDRNKDQEVNFQEYITFLGALAMI. Residues T28 and E33 each contribute to the Ca(2+) site. The residue at position 40 (K40) is an N6-acetyllysine. The residue at position 46 (S46) is a Phosphoserine. N6-acetyllysine; alternate is present on K47. K47 bears the N6-succinyllysine; alternate mark. Ca(2+) is bound by residues D61, N63, D65, E67, and E72.

This sequence belongs to the S-100 family. Homodimer; head to tail assembly of 2 subunits. Interacts with CACYBP in a calcium-dependent manner. Interacts with ANXA2 and ANXA11 (via N-terminus). Interacts with SUGT1. Interacts with TP53; has higher affinity for TP53 that is phosphorylated on its N-terminal domain, and lower affinity for TP53 that is phosphorylated on its C-terminal domain. Interacts with tropomyosin. Interacts with FKBP4. Interacts with PPP5C (via TPR repeats); the interaction is calcium-dependent and modulates PPP5C activity. Interacts with TPPP; this interaction inhibits TPPP dimerization.

It localises to the nucleus envelope. The protein resides in the cytoplasm. It is found in the cell membrane. Functionally, may function as calcium sensor and modulator, contributing to cellular calcium signaling. May function by interacting with other proteins, such as TPR-containing proteins, and indirectly play a role in many physiological processes such as the reorganization of the actin cytoskeleton and in cell motility. Binds 2 calcium ions. Calcium binding is cooperative. The polypeptide is Protein S100-A6 (S100A6) (Oryctolagus cuniculus (Rabbit)).